Here is a 2140-residue protein sequence, read N- to C-terminus: MAERRAFAQKISRTVAAEVRKQISGQYSGSPQLLKNLNIVGNISHHTTVPLTEAVDPVDLEDYLITHPLAVDSGPLRDLIEFPPDDIEVVYSPRDCRTLVSAVPEESEMDPHVRDCIRSYTEDWAIVIRKYHKLGTGFNPNTLDKQKERQKGLPKQVFESDEAPDGNSYQDDQDDLKRRSMSIDDTPRGSWACSIFDLKNSLPDALLPNLLDRTPNEEIDRQNDDQRKSNRHKELFALHPSPDEEEPIERLSVPDIPKEHFGQRLLVKCLSLKFEIEIEPIFASLALYDVKEKKKISENFYFDLNSEQMKGLLRPHVPPAAITTLARSAIFSITYPSQDVFLVIKLEKVLQQGDIGECAEPYMIFKEADATKNKEKLEKLKSQADQFCQRLGKYRMPFAWTAIHLMNIVSSAGSLERDSTEVEISTGERKGSWSERRNSSIVGRRSLERTTSGDDACNLTSFRPATLTVTNFFKQEGDRLSDEDLYKFLADMRRPSSVLRRLRPITAQLKIDISPAPENPHYCLTPELLQVKLYPDSRVRPTREILEFPARDVYVPNTTYRNLLYIYPQSLNFANRQGSARNITVKVQFMYGEDPSNAMPVIFGKSSCSEFSKEAYTAVVYHNRSPDFHEEIKVKLPATLTDHHHLLFTFYHVSCQQKQNTPLETPVGYTWIPMLQNGRLKTGQFCLPVSLEKPPQAYSVLSPEVPLPGMKWVDNHKGVFNVEVVAVSSIHTQDPYLDKFFALVNALDEHLFPVRIGDMRIMENNLENELKSSISALNSSQLEPVVRFLHLLLDKLILLVIRPPVIAGQIVNLGQASFEAMASIINRLHKNLEGNHDQHGRNSLLASYIHYVFRLPNTYPNSSSPGPGGLGGSVHYATMARSAVRPASLNLNRSRSLSNSNPDISGTPTSPDDEVRSIIGSKGLDRSNSWVNTGGPKAAPWGSNPSPSAESTQAMDRSCNRMSSHTETSSFLQTLTGRLPTKKLFHEELALQWVVCSGSVRESALQQAWFFFELMVKSMVHHLYFNDKLEAPRKSRFPERFMDDIAALVSTIASDIVSRFQKDTEMVERLNTSLAFFLNDLLSVMDRGFVFSLIKSCYKQVSSKLYSLPNPSVLVSLRLDFLRIICSHEHYVTLNLPCSLLTPPASPSPSVSSATSQSSGFSTNVQDQKIANMFELSVPFRQQHYLAGLVLTELAVILDPDAEGLFGLHKKVINMVHNLLSSHDSDPRYSDPQIKARVAMLYLPLIGIIMETVPQLYDFTETHNQRGRPICIATDDYESESGSMISQTVAMAIAGTSVPQLTRPGSFLLTSTSGRQHTTFSAESSRSLLICLLWVLKNADETVLQKWFTDLSVLQLNRLLDLLYLCVSCFEYKGKKVFERMNSLTFKKSKDMRAKLEEAILGSIGARQEMVRRSRGQLGTYTIASPPERSPSGSAFGSQENLRWRKDMTHWRQNTEKLDKSRAEIEHEALIDGNLATEANLIILDTLEIVVQTVSVTESKESILGGVLKVLLHSMACNQSAVYLQHCFATQRALVSKFPELLFEEETEQCADLCLRLLRHCSSSIGTIRSHASASLYLLMRQNFEIGNNFARVKMQVTMSLSSLVGTSQNFNEEFLRRSLKTILTYAEEDLELRETTFPDQVQDLVFNLHMILSDTVKMKEHQEDPEMLIDLMYRIAKGYQTSPDLRLTWLQNMAGKHSERSNHAEAAQCLVHSAALVAEYLSMLEDRKYLPVGCVTFQNISSNVLEESAVSDDVVSPDEEGICSGKYFTESGLVGLLEQAAASFSMAGMYEAVNEVYKVLIPIHEANRDAKKLSTIHGKLQEAFSKIVHQSTGWERMFGTYFRVGFYGTKFGDLDEQEFVYKEPAITKLAEISHRLEGFYGERFGEDVVEVIKDSNPVDKCKLDPNKAYIQITYVEPYFDTYEMKDRITYFDKNYNLRRFMYCTPFTLDGRAHGELHEQFKRKTILTTSHAFPYIKTRVNVTHKEEIILTPIEVAIEDMQKKTQELAFATHQDPADPKMLQMVLQGSVGTTVNQGPLEVAQVFLSEIPSDPKLFRHHNKLRLCFKDFTKRCEDALRKNKSLIGPDQKEYQRELERNYHRLKEALQPLINRKIPQLYKAVLPVTCHRDSFSRMSLRKMDL.

Phosphoserine is present on residues Ser-30, Ser-180, and Ser-182. The disordered stretch occupies residues 138–183 (FNPNTLDKQKERQKGLPKQVFESDEAPDGNSYQDDQDDLKRRSMSI). Residues 365–395 (FKEADATKNKEKLEKLKSQADQFCQRLGKYR) adopt a coiled-coil conformation. N6-methyllysine is present on Lys-381. Thr-450 carries the post-translational modification Phosphothreonine. Position 452 is a phosphoserine (Ser-452). Residues 561-727 (RNLLYIYPQS…GVFNVEVVAV (167 aa)) form the C2 DOCK-type domain. Residues Ser-862, Ser-864, Ser-882, Ser-888, Ser-896, Ser-900, and Ser-905 each carry the phosphoserine modification. Over residues 888-901 (SLNLNRSRSLSNSN) the composition is skewed to low complexity. The segment at 888–971 (SLNLNRSRSL…MSSHTETSSF (84 aa)) is disordered. Thr-907 and Thr-909 each carry phosphothreonine. 14 positions are modified to phosphoserine: Ser-910, Ser-929, Ser-964, Ser-1383, Lys-1390, Ala-1394, Glu-1398, Tyr-1421, Ser-1425, Arg-1429, Ser-1430, Ser-1432, Ser-1434, and Ser-1438. Residues 943 to 971 (SNPSPSAESTQAMDRSCNRMSSHTETSSF) show a composition bias toward polar residues. One can recognise a DOCKER domain in the interval 1678–2114 (KGYQTSPDLR…LQPLINRKIP (437 aa)). Lys-1962 bears the N6-acetyllysine mark. Residues 2086 to 2112 (DQKEYQRELERNYHRLKEALQPLINRK) are a coiled coil. Ser-2129 carries the phosphoserine modification.

The protein belongs to the DOCK family. Component of the DOCK7-induced septin displacement/DISP complex, at least composed of DOCK7, LRCH3 and MYO6. Interacts with TSC1. Interacts with nucleotide-free RAC1 and RAC3. Interacts with TACC3 and CRY1. Interacts with NOD2. As to expression, widely expressed.

Its subcellular location is the cell projection. The protein localises to the axon. Its function is as follows. Functions as a guanine nucleotide exchange factor (GEF), which activates Rac1 and Rac3 Rho small GTPases by exchanging bound GDP for free GTP. Does not have a GEF activity for CDC42. Required for STMN1 'Ser-15' phosphorylation during axon formation and consequently for neuronal polarization. As part of the DISP complex, may regulate the association of septins with actin and thereby regulate the actin cytoskeleton. Has a role in pigmentation. Involved in the regulation of cortical neurogenesis through the control of radial glial cells (RGCs) proliferation versus differentiation; negatively regulates the basal-to-apical interkinetic nuclear migration of RGCs by antagonizing the microtubule growth-promoting function of TACC3. The chain is Dedicator of cytokinesis protein 7 (DOCK7) from Homo sapiens (Human).